A 220-amino-acid polypeptide reads, in one-letter code: 3-keto-L-gulonate-6-phosphate decarboxylase SgbH (220 aa).

A substrate-binding site is contributed by D11. Mg(2+) is bound by residues E33 and D62. R192 lines the substrate pocket.

This sequence belongs to the HPS/KGPDC family. KGPDC subfamily. As to quaternary structure, homodimer. It depends on Mg(2+) as a cofactor.

The enzyme catalyses 3-dehydro-L-gulonate 6-phosphate + H(+) = L-xylulose 5-phosphate + CO2. Catalyzes the decarboxylation of 3-keto-L-gulonate-6-P into L-xylulose-5-P. May be involved in the utilization of 2,3-diketo-L-gulonate. The polypeptide is 3-keto-L-gulonate-6-phosphate decarboxylase SgbH (sgbH) (Escherichia coli (strain K12)).